The sequence spans 609 residues: Alpha-glycerophosphate oxidase (609 aa).

21-49 (DVLIIGGGITGAGVAVQTAAAGMKTVLLE) is an FAD binding site.

The cofactor is FAD.

The protein localises to the cytoplasm. The catalysed reaction is sn-glycerol 3-phosphate + O2 = dihydroxyacetone phosphate + H2O2. It participates in membrane lipid metabolism; glycerophospholipid metabolism. This chain is Alpha-glycerophosphate oxidase (glpO), found in Enterococcus casseliflavus (Enterococcus flavescens).